The sequence spans 414 residues: MSRKIHGGSVVEMQGDEMTRIIWELIKEKLILPYVELDLHSYDLGIENRDATNDQVTKDAAEAIKKYNVGVKCATITPDEKRVEEFKLKQMWKSPNGTIRNILGGTVFREAIICKNIPRLVTGWVKPIIIGRHAYGDQYRATDFVVPGPGKVEITYTPKDGSQKVTYLVHDFEEGGGVAMGMYNQDKSIEDFAHSSFQMALSKGWPLYLSTKNTILKKYDGRFKDIFQEIYDKQYKSKFEAQKIWYEHRLIDDMVAQAMKSEGGFIWACKNYDGDVQSDSVAQGYGSLGMMTSVLICPDGKTVEAEAAHGTVTRHYRMYQKGQETSTNPIASIFAWSRGLAHRAKLDNNTELSFFANALEEVCIETIEAGFMTKDLAACIKGLPNVQRSDYLNTFEFMDKLGENLKAKLAQAKL.

An N-acetylserine modification is found at Ser-2. Phosphotyrosine is present on Tyr-42. 75 to 77 (TIT) contacts NADP(+). Position 77 (Thr-77) interacts with substrate. Lys-81 is subject to N6-acetyllysine. Residue Arg-82 coordinates NADP(+). Substrate-binding positions include 94–100 (SPNGTIR) and Arg-109. Lys-126 carries the N6-succinyllysine modification. Substrate is bound by residues Arg-132 and Lys-212. Lys-224, Lys-233, and Lys-243 each carry N6-acetyllysine. Asp-252 contacts Mn(2+). NADP(+) is bound at residue Lys-260. Mn(2+) is bound by residues Asp-275 and Asp-279. Position 310-315 (310-315 (GTVTRH)) interacts with NADP(+). Lys-321 is modified (N6-acetyllysine). Asn-328 contacts NADP(+). Phosphoserine is present on Ser-389. An N6-succinyllysine modification is found at Lys-400.

The protein belongs to the isocitrate and isopropylmalate dehydrogenases family. As to quaternary structure, homodimer. Requires Mg(2+) as cofactor. Mn(2+) is required as a cofactor. In terms of processing, the N-terminus is blocked. Post-translationally, acetylation at Lys-374 dramatically reduces catalytic activity. As to expression, ubiquitous.

The protein resides in the cytoplasm. Its subcellular location is the cytosol. It is found in the peroxisome. It catalyses the reaction D-threo-isocitrate + NADP(+) = 2-oxoglutarate + CO2 + NADPH. Functionally, catalyzes the NADP(+)-dependent oxidative decarboxylation of isocitrate (D-threo-isocitrate) to 2-ketoglutarate (2-oxoglutarate), which is required by other enzymes such as the phytanoyl-CoA dioxygenase. Plays a critical role in the generation of NADPH, an important cofactor in many biosynthesis pathways. May act as a corneal epithelial crystallin and may be involved in maintaining corneal epithelial transparency. The chain is Isocitrate dehydrogenase [NADP] cytoplasmic (Idh1) from Rattus norvegicus (Rat).